The primary structure comprises 96 residues: Small ribosomal subunit protein bS18 (96 aa).

Positions methionine 1–serine 20 are disordered.

The protein belongs to the bacterial ribosomal protein bS18 family. As to quaternary structure, part of the 30S ribosomal subunit. Forms a tight heterodimer with protein bS6.

Its function is as follows. Binds as a heterodimer with protein bS6 to the central domain of the 16S rRNA, where it helps stabilize the platform of the 30S subunit. The protein is Small ribosomal subunit protein bS18 of Anaplasma phagocytophilum (strain HZ).